A 264-amino-acid polypeptide reads, in one-letter code: Major prion protein (264 aa).

The N-terminal stretch at methionine 1–cysteine 24 is a signal peptide. The tract at residues lysine 25–alanine 241 is interaction with GRB2, ERI3 and SYN1. Positions arginine 27–asparagine 119 are disordered. Tandem repeats lie at residues serine 54 to glutamine 62, proline 63 to glutamine 70, proline 71 to glutamine 78, proline 79 to glutamine 86, proline 87 to glutamine 94, and proline 95 to glutamine 103. Positions serine 54–glutamine 103 are 6 X 8 AA tandem repeats of P-H-G-G-G-W-G-Q. Positions glutamine 55 to glycine 105 are enriched in gly residues. Residues histidine 72, glycine 73, glycine 74, histidine 80, glycine 81, glycine 82, histidine 88, glycine 89, glycine 90, histidine 96, glycine 98, and glycine 99 each coordinate Cu(2+). Cysteines 190 and 225 form a disulfide. N-linked (GlcNAc...) asparagine glycosylation is found at asparagine 192 and asparagine 208. Alanine 241 carries GPI-anchor amidated alanine lipidation. Positions serine 242–glycine 264 are cleaved as a propeptide — removed in mature form.

Belongs to the prion family. As to quaternary structure, monomer and homodimer. Has a tendency to aggregate into amyloid fibrils containing a cross-beta spine, formed by a steric zipper of superposed beta-strands. Soluble oligomers may represent an intermediate stage on the path to fibril formation. Copper binding may promote oligomerization. Interacts with GRB2, APP, ERI3/PRNPIP and SYN1. Mislocalized cytosolically exposed PrP interacts with MGRN1; this interaction alters MGRN1 subcellular location and causes lysosomal enlargement. Interacts with KIAA1191.

The protein resides in the cell membrane. The protein localises to the golgi apparatus. Functionally, its primary physiological function is unclear. Has cytoprotective activity against internal or environmental stresses. May play a role in neuronal development and synaptic plasticity. May be required for neuronal myelin sheath maintenance. May play a role in iron uptake and iron homeostasis. Soluble oligomers are toxic to cultured neuroblastoma cells and induce apoptosis (in vitro). Association with GPC1 (via its heparan sulfate chains) targets PRNP to lipid rafts. Also provides Cu(2+) or Zn(2+) for the ascorbate-mediated GPC1 deaminase degradation of its heparan sulfate side chains. The sequence is that of Major prion protein (PRNP) from Bubalus bubalis (Domestic water buffalo).